Reading from the N-terminus, the 396-residue chain is MAKSKFERVKPHVNVGTIGHVDHGKTTLTAAITTILTKKFGGEAKSYDQIDSAPEERARGITINTSHVEYETDKRHYAHVDCPGHADYVKNMITGAAQMDGAILVVSAADGPMPQTREHILLARQVGVPYIIVFMNKADMVDDAELLELVEMEIRELLSNYDFPGDDTPIIIGSALKALEGDKSDIGEAAILKLAEALDSYIPEPERAIDGAFIMPVEDVFSISGRGTVVTGRVERGIVKVGDEIEIVGLKPTIKTVCTGVEMFRKLLDQGQAGDNVGILLRGTKREEVERGQVLAKPGSILPHTKFTAEIYVLSKEEGGRHTPFFAGYRPQFYFRTTDVTGSIELPAGVEMVMPGDNISVTVNLIAPIAMDEGLRFAIREGGRTVGAGVVAKVIE.

In terms of domain architecture, tr-type G spans 10–206; that stretch reads KPHVNVGTIG…ALDSYIPEPE (197 aa). The interval 19–26 is G1; the sequence is GHVDHGKT. Residue 19–26 coordinates GTP; the sequence is GHVDHGKT. Residue Thr-26 participates in Mg(2+) binding. Residues 60–64 form a G2 region; it reads GITIN. Residues 81–84 form a G3 region; the sequence is DCPG. GTP contacts are provided by residues 81-85 and 136-139; these read DCPGH and NKAD. Residues 136 to 139 form a G4 region; the sequence is NKAD. The G5 stretch occupies residues 174–176; it reads SAL.

It belongs to the TRAFAC class translation factor GTPase superfamily. Classic translation factor GTPase family. EF-Tu/EF-1A subfamily. In terms of assembly, monomer.

The protein localises to the cytoplasm. The catalysed reaction is GTP + H2O = GDP + phosphate + H(+). Its function is as follows. GTP hydrolase that promotes the GTP-dependent binding of aminoacyl-tRNA to the A-site of ribosomes during protein biosynthesis. This Nitrosomonas europaea (strain ATCC 19718 / CIP 103999 / KCTC 2705 / NBRC 14298) protein is Elongation factor Tu.